A 397-amino-acid chain; its full sequence is Carnitine transport ATP-binding protein OpuCA (397 aa).

One can recognise an ABC transporter domain in the interval leucine 2–isoleucine 236. Glycine 35–threonine 42 is an ATP binding site. 2 CBS domains span residues methionine 255–valine 311 and isoleucine 315–leucine 373. A disordered region spans residues threonine 377–glycine 397. Positions alanine 384 to glycine 397 are enriched in basic and acidic residues.

This sequence belongs to the ABC transporter superfamily. In terms of assembly, the complex is composed of two ATP-binding proteins (OpuCA), two transmembrane proteins (OpuCB and OpuCD) and a solute-binding protein (OpuCC).

The catalysed reaction is a quaternary ammonium(out) + ATP + H2O = a quaternary ammonium(in) + ADP + phosphate + H(+). Its function is as follows. Part of the ABC transporter complex OpuCABCD involved in carnitine uptake. Probably responsible for energy coupling to the transport system. Involved, with BetL and GbuABC, in osmoprotection and cryoprotection of Listeria. Can also mediate weak glycine betaine transport. In Listeria monocytogenes serotype 1/2a (strain 10403S), this protein is Carnitine transport ATP-binding protein OpuCA (opuCA).